We begin with the raw amino-acid sequence, 178 residues long: Ribosome maturation factor RimM (178 aa).

One can recognise a PRC barrel domain in the interval 101-178 (TDEYYWYQLV…VMRVEWDADF (78 aa)).

Belongs to the RimM family. Binds ribosomal protein uS19.

It is found in the cytoplasm. Its function is as follows. An accessory protein needed during the final step in the assembly of 30S ribosomal subunit, possibly for assembly of the head region. Essential for efficient processing of 16S rRNA. May be needed both before and after RbfA during the maturation of 16S rRNA. It has affinity for free ribosomal 30S subunits but not for 70S ribosomes. This Pseudomonas entomophila (strain L48) protein is Ribosome maturation factor RimM.